We begin with the raw amino-acid sequence, 418 residues long: UPF0754 membrane protein alr5253 (418 aa).

The next 2 helical transmembrane spans lie at 10–30 (WSHL…GYFT) and 394–414 (IVSL…AFFI).

This sequence belongs to the UPF0754 family.

It localises to the cell inner membrane. This Nostoc sp. (strain PCC 7120 / SAG 25.82 / UTEX 2576) protein is UPF0754 membrane protein alr5253.